The sequence spans 953 residues: ABC transporter A family member 11 (953 aa).

6 helical membrane-spanning segments follow: residues 33 to 53, 230 to 250, 277 to 297, 307 to 327, 341 to 361, and 417 to 437; these read CLQIFSSFFFILLIFCIEEAM, GPVFFLAFSMFGFVLQLGALV, TWEGILTLVSSLFLVLFGMIF, FVLVFLLFLLFQFNMIGLAFA, VGFLVFLIGFITQFVSATGFP, and VISINIIYQWLLGTFLFWFVL. An ABC transporter domain is found at 519–764; sequence VQIHGLAKTY…FGTGFVATVS (246 aa). Residue 565–572 coordinates ATP; it reads GPNGAGKT.

This sequence belongs to the ABC transporter superfamily. ABCA family. CPR flippase (TC 3.A.1.211) subfamily.

It localises to the membrane. The sequence is that of ABC transporter A family member 11 (ABCA11) from Arabidopsis thaliana (Mouse-ear cress).